A 266-amino-acid chain; its full sequence is F-actin-capping protein subunit beta (266 aa).

The protein belongs to the F-actin-capping protein beta subunit family. In terms of assembly, component of the F-actin capping complex, composed of a heterodimer of an alpha and a beta subunit.

The protein resides in the cytoplasm. The protein localises to the cytoskeleton. Its subcellular location is the actin patch. Functionally, F-actin-capping proteins bind in a Ca(2+)-independent manner to the fast growing ends of actin filaments (barbed end) thereby blocking the exchange of subunits at these ends. Unlike other capping proteins (such as gelsolin and severin), these proteins do not sever actin filaments. This chain is F-actin-capping protein subunit beta (cap2), found in Emericella nidulans (strain FGSC A4 / ATCC 38163 / CBS 112.46 / NRRL 194 / M139) (Aspergillus nidulans).